The following is a 584-amino-acid chain: uncharacterized protein (584 aa).

The first 27 residues, 1–27 (MGLSRKKIFTWPLLLTGMAVVSTTFSS), serve as a signal peptide directing secretion. Cys28 carries the N-palmitoyl cysteine lipid modification. Cys28 carries the S-diacylglycerol cysteine lipid modification. The interval 530 to 570 (NLPKKEGSTNQANQQTNQTNRSTDATKKDSSSDETNKNPLA) is disordered. The span at 538 to 552 (TNQANQQTNQTNRST) shows a compositional bias: low complexity. Residues 553 to 565 (DATKKDSSSDETN) show a composition bias toward basic and acidic residues.

It belongs to the MG067/MG068/MG395 family.

It is found in the cell membrane. This is an uncharacterized protein from Mycoplasmoides gallisepticum (strain R(low / passage 15 / clone 2)) (Mycoplasma gallisepticum).